Here is a 437-residue protein sequence, read N- to C-terminus: GTPase Obg (437 aa).

In terms of domain architecture, Obg spans serine 2–leucine 160. The OBG-type G domain maps to alanine 161–alanine 338. GTP-binding positions include glycine 167–serine 174, phenylalanine 192–valine 196, aspartate 214–glycine 217, asparagine 284–aspartate 287, and serine 319–leucine 321. Mg(2+) is bound by residues serine 174 and threonine 194. Residues glycine 359–aspartate 437 enclose the OCT domain.

This sequence belongs to the TRAFAC class OBG-HflX-like GTPase superfamily. OBG GTPase family. As to quaternary structure, monomer. It depends on Mg(2+) as a cofactor.

Its subcellular location is the cytoplasm. Functionally, an essential GTPase which binds GTP, GDP and possibly (p)ppGpp with moderate affinity, with high nucleotide exchange rates and a fairly low GTP hydrolysis rate. Plays a role in control of the cell cycle, stress response, ribosome biogenesis and in those bacteria that undergo differentiation, in morphogenesis control. This is GTPase Obg from Streptococcus pyogenes serotype M28 (strain MGAS6180).